A 182-amino-acid polypeptide reads, in one-letter code: dCTP deaminase, dUMP-forming (182 aa).

Residues 96-101 (RSSIGR), Asp-113, 121-123 (TLE), Gln-142, Tyr-156, and Gln-163 each bind dCTP. The Proton donor/acceptor role is filled by Glu-123.

It belongs to the dCTP deaminase family. In terms of assembly, homotrimer.

The enzyme catalyses dCTP + 2 H2O = dUMP + NH4(+) + diphosphate. Its pathway is pyrimidine metabolism; dUMP biosynthesis; dUMP from dCTP: step 1/1. In terms of biological role, bifunctional enzyme that catalyzes both the deamination of dCTP to dUTP and the hydrolysis of dUTP to dUMP without releasing the toxic dUTP intermediate. In Halothermothrix orenii (strain H 168 / OCM 544 / DSM 9562), this protein is dCTP deaminase, dUMP-forming.